The chain runs to 601 residues: Keratin, type II cytoskeletal 5 (601 aa).

The tract at residues 1 to 168 (MSRQSTVSFR…DPTIQRVRTE (168 aa)) is head. Phosphoserine occurs at positions 5, 8, 16, and 21. At Thr24 the chain carries Phosphothreonine; by CDK1. Phosphoserine occurs at positions 26, 36, 50, 64, 71, and 75. Phosphothreonine; by CDK1 is present on Thr152. Residue Thr167 is modified to Phosphothreonine; by AURKB. The coil 1A stretch occupies residues 169-204 (EREQIKTLNNKFASFIDKVRFLEQQNKVLDTKWALL). The IF rod domain maps to 169–482 (EREQIKTLNN…KLLEGEECRL (314 aa)). A linker 1 region spans residues 205–223 (QEQGTKTVRQNLEPLLEQY). The tract at residues 224–316 (INNLRRQLDG…FFDAELSQMQ (93 aa)) is coil 1B. Residues 317 to 339 (THVSDTSVVLSMDNNRSLDLDSI) are linker 12. The coil 2 stretch occupies residues 340 to 478 (IAEVKAQYED…ATYRKLLEGE (139 aa)). The interval 479 to 601 (ECRLSGEGVG…TSSSRKSFKS (123 aa)) is tail. The tract at residues 576–601 (FGSGGGSSSSVKFVSTTSSSRKSFKS) is disordered. Low complexity predominate over residues 583 to 601 (SSSVKFVSTTSSSRKSFKS).

The protein belongs to the intermediate filament family. As to quaternary structure, heterodimer of a type I and a type II keratin. Heterodimer with type I keratin KRT25 leading to the formation of keratin intermediate filament (KIF) network. Forms a heterodimer (via 2B domains) with KRT14 (via 2B domains). Interacts with TCHP. Interacts with EPPK1. Interacts with AMELX. Interacts with PKP1 (via N-terminus) and PKP2. Post-translationally, phosphorylated by CDK1, AURKB and Rho-kinase, phosphorylation is regulated by the cell cycle. Thr-24 phosphorylation, mediated by CDK1, peaks during prometaphase or metaphase cells with phosphorylated filamentous structures evident throughout the cytoplasm early mitosis. CDK1 phosphorylates Thr-24 in mitotic cells at the site of injury. O-glycosylated.

Its subcellular location is the cytoplasm. In terms of biological role, required for the formation of keratin intermediate filaments in the basal epidermis and maintenance of the skin barrier in response to mechanical stress. Regulates the recruitment of Langerhans cells to the epidermis, potentially by modulation of the abundance of macrophage chemotactic cytokines, macrophage inflammatory cytokines and CTNND1 localization in keratinocytes. The polypeptide is Keratin, type II cytoskeletal 5 (Bos taurus (Bovine)).